We begin with the raw amino-acid sequence, 461 residues long: Transcription factor GTE3, chloroplastic (461 aa).

The span at 1–11 (MASGPIAGGGV) shows a compositional bias: gly residues. The interval 1 to 41 (MASGPIAGGGVSKTKHKWSDSGNKSQKRSKPTVANSNSLGL) is disordered. The transit peptide at 1 to 51 (MASGPIAGGGVSKTKHKWSDSGNKSQKRSKPTVANSNSLGLEDNHQMMKIS) directs the protein to the chloroplast. The Bromo domain occupies 114–220 (KGTVQILKSC…NLFEEKWVPL (107 aa)). The region spanning 298 to 379 (LVEEASANRD…EYKESLSKKK (82 aa)) is the NET domain. Residues 376–392 (SKKKEEQGLDSERDAES) are compositionally biased toward basic and acidic residues. The interval 376-461 (SKKKEEQGLD…SSGHESDTGN (86 aa)) is disordered. The span at 393–412 (FHNSVHESNTLVTGLESSKV) shows a compositional bias: polar residues. The span at 429–451 (GGSSSSNSSSSGSGSGSSGSDSD) shows a compositional bias: low complexity. Positions 452–461 (SSGHESDTGN) are enriched in basic and acidic residues.

Interacts with SIZ1 (via PHD domain). Sumoylated by SIZ1. Sumoylation reduces capacity to bind to acetylated histone H3.

Its subcellular location is the plastid. It is found in the chloroplast. Functionally, probable transcription factor that binds to acetylated histone H3. In Arabidopsis thaliana (Mouse-ear cress), this protein is Transcription factor GTE3, chloroplastic (GTE3).